Consider the following 189-residue polypeptide: Molybdopterin synthase catalytic subunit (189 aa).

The segment covering 1–30 (MSSLEISNSCFSPETRSPSSRQSVEDNASE) has biased composition (polar residues). Positions 1–41 (MSSLEISNSCFSPETRSPSSRQSVEDNASEPSGKDVDDVQE) are disordered. S20 carries the phosphoserine modification. A compositionally biased stretch (basic and acidic residues) spans 32–41 (SGKDVDDVQE). Substrate is bound by residues 143–144 (HR), K159, and 166–168 (KKE).

The protein belongs to the MoaE family. MOCS2B subfamily. In terms of assembly, heterotetramer; composed of 2 small (MOCS2A) and 2 large (MOCS2B) subunits.

It localises to the cytoplasm. It is found in the cytosol. It carries out the reaction 2 [molybdopterin-synthase sulfur-carrier protein]-C-terminal-Gly-aminoethanethioate + cyclic pyranopterin phosphate + H2O = molybdopterin + 2 [molybdopterin-synthase sulfur-carrier protein]-C-terminal Gly-Gly + 2 H(+). It functions in the pathway cofactor biosynthesis; molybdopterin biosynthesis. Catalytic subunit of the molybdopterin synthase complex, a complex that catalyzes the conversion of precursor Z into molybdopterin. Acts by mediating the incorporation of 2 sulfur atoms from thiocarboxylated MOCS2A into precursor Z to generate a dithiolene group. This is Molybdopterin synthase catalytic subunit from Mus musculus (Mouse).